Reading from the N-terminus, the 320-residue chain is Cytochrome f (320 aa).

The signal sequence occupies residues 1–35; the sequence is MQNRNTFSWVKEPINRSISVLIIIYVITQTSISNA. Heme-binding residues include Tyr-36, Cys-56, Cys-59, and His-60. The helical transmembrane segment at 286–306 threads the bilayer; that stretch reads VQGLLFFLASVTLAQIFLVLK.

It belongs to the cytochrome f family. In terms of assembly, the 4 large subunits of the cytochrome b6-f complex are cytochrome b6, subunit IV (17 kDa polypeptide, petD), cytochrome f and the Rieske protein, while the 4 small subunits are PetG, PetL, PetM and PetN. The complex functions as a dimer. The cofactor is heme.

The protein localises to the plastid. Its subcellular location is the chloroplast thylakoid membrane. Functionally, component of the cytochrome b6-f complex, which mediates electron transfer between photosystem II (PSII) and photosystem I (PSI), cyclic electron flow around PSI, and state transitions. The chain is Cytochrome f from Piper cenocladum (Ant piper).